The following is an 857-amino-acid chain: Leucine--tRNA ligase (857 aa).

Residues 42-52 (PYPSGRLHMGH) carry the 'HIGH' region motif. The short motif at 617–621 (KMSKS) is the 'KMSKS' region element. An ATP-binding site is contributed by K620.

This sequence belongs to the class-I aminoacyl-tRNA synthetase family.

It localises to the cytoplasm. It catalyses the reaction tRNA(Leu) + L-leucine + ATP = L-leucyl-tRNA(Leu) + AMP + diphosphate. The sequence is that of Leucine--tRNA ligase from Vibrio vulnificus (strain CMCP6).